A 297-amino-acid chain; its full sequence is Light-independent protochlorophyllide reductase iron-sulfur ATP-binding protein (297 aa).

Residues 41-46 (GIGKST) and Lys70 contribute to the ATP site. A Mg(2+)-binding site is contributed by Ser45. [4Fe-4S] cluster-binding residues include Cys126 and Cys160. Residues 211 to 212 (NR) and 235 to 237 (PDL) each bind ATP.

It belongs to the NifH/BchL/ChlL family. Homodimer. Protochlorophyllide reductase is composed of three subunits; BchL, BchN and BchB. It depends on [4Fe-4S] cluster as a cofactor.

The enzyme catalyses chlorophyllide a + oxidized 2[4Fe-4S]-[ferredoxin] + 2 ADP + 2 phosphate = protochlorophyllide a + reduced 2[4Fe-4S]-[ferredoxin] + 2 ATP + 2 H2O. The protein operates within porphyrin-containing compound metabolism; bacteriochlorophyll biosynthesis (light-independent). Functionally, component of the dark-operative protochlorophyllide reductase (DPOR) that uses Mg-ATP and reduced ferredoxin to reduce ring D of protochlorophyllide (Pchlide) to form chlorophyllide a (Chlide). This reaction is light-independent. The L component serves as a unique electron donor to the NB-component of the complex, and binds Mg-ATP. The protein is Light-independent protochlorophyllide reductase iron-sulfur ATP-binding protein of Methylorubrum extorquens (strain CM4 / NCIMB 13688) (Methylobacterium extorquens).